We begin with the raw amino-acid sequence, 592 residues long: Aspartate--tRNA ligase (592 aa).

Residue glutamate 171 coordinates L-aspartate. The segment at 195-198 (QLFK) is aspartate. Residue arginine 217 participates in L-aspartate binding. ATP contacts are provided by residues 217 to 219 (RDE) and glutamine 226. Histidine 448 provides a ligand contact to L-aspartate. Glutamate 482 serves as a coordination point for ATP. An L-aspartate-binding site is contributed by arginine 489. 534 to 537 (GLDR) serves as a coordination point for ATP.

It belongs to the class-II aminoacyl-tRNA synthetase family. Type 1 subfamily. In terms of assembly, homodimer.

It localises to the cytoplasm. The catalysed reaction is tRNA(Asp) + L-aspartate + ATP = L-aspartyl-tRNA(Asp) + AMP + diphosphate. Its function is as follows. Catalyzes the attachment of L-aspartate to tRNA(Asp) in a two-step reaction: L-aspartate is first activated by ATP to form Asp-AMP and then transferred to the acceptor end of tRNA(Asp). In Vibrio vulnificus (strain CMCP6), this protein is Aspartate--tRNA ligase.